We begin with the raw amino-acid sequence, 344 residues long: RNA 3'-terminal phosphate cyclase (344 aa).

Residues glutamine 102 and 284-288 each bind ATP; that span reads FLGDQ. The Tele-AMP-histidine intermediate role is filled by histidine 308.

It belongs to the RNA 3'-terminal cyclase family. Type 1 subfamily.

It is found in the cytoplasm. It carries out the reaction a 3'-end 3'-phospho-ribonucleotide-RNA + ATP = a 3'-end 2',3'-cyclophospho-ribonucleotide-RNA + AMP + diphosphate. In terms of biological role, catalyzes the conversion of 3'-phosphate to a 2',3'-cyclic phosphodiester at the end of RNA. The mechanism of action of the enzyme occurs in 3 steps: (A) adenylation of the enzyme by ATP; (B) transfer of adenylate to an RNA-N3'P to produce RNA-N3'PP5'A; (C) and attack of the adjacent 2'-hydroxyl on the 3'-phosphorus in the diester linkage to produce the cyclic end product. The biological role of this enzyme is unknown but it is likely to function in some aspects of cellular RNA processing. This chain is RNA 3'-terminal phosphate cyclase, found in Thermococcus gammatolerans (strain DSM 15229 / JCM 11827 / EJ3).